A 435-amino-acid polypeptide reads, in one-letter code: 3-ketoacyl-CoA thiolase (435 aa).

Cys98 functions as the Acyl-thioester intermediate in the catalytic mechanism. Catalysis depends on proton acceptor residues His391 and Cys421.

This sequence belongs to the thiolase-like superfamily. Thiolase family. In terms of assembly, heterotetramer of two alpha chains (FadJ) and two beta chains (FadI).

The protein resides in the cytoplasm. It catalyses the reaction an acyl-CoA + acetyl-CoA = a 3-oxoacyl-CoA + CoA. It functions in the pathway lipid metabolism; fatty acid beta-oxidation. In terms of biological role, catalyzes the final step of fatty acid oxidation in which acetyl-CoA is released and the CoA ester of a fatty acid two carbons shorter is formed. This chain is 3-ketoacyl-CoA thiolase, found in Vibrio cholerae serotype O1 (strain ATCC 39541 / Classical Ogawa 395 / O395).